Reading from the N-terminus, the 340-residue chain is Probable complex I intermediate-associated protein 30, mitochondrial (340 aa).

The protein belongs to the CIA30 family.

The protein resides in the mitochondrion. Its function is as follows. Chaperone protein involved in the assembly of the mitochondrial NADH:ubiquinone oxidoreductase complex (complex I). Required for normal growth and reproduction. In Caenorhabditis elegans, this protein is Probable complex I intermediate-associated protein 30, mitochondrial (nuaf-1).